Reading from the N-terminus, the 153-residue chain is Putative pre-16S rRNA nuclease (153 aa).

Belongs to the YqgF nuclease family.

The protein resides in the cytoplasm. In terms of biological role, could be a nuclease involved in processing of the 5'-end of pre-16S rRNA. This is Putative pre-16S rRNA nuclease from Prochlorococcus marinus (strain AS9601).